We begin with the raw amino-acid sequence, 432 residues long: Glutamate-1-semialdehyde 2,1-aminomutase (432 aa).

An N6-(pyridoxal phosphate)lysine modification is found at Lys-272.

This sequence belongs to the class-III pyridoxal-phosphate-dependent aminotransferase family. HemL subfamily. As to quaternary structure, homodimer. Requires pyridoxal 5'-phosphate as cofactor.

Its subcellular location is the cytoplasm. The catalysed reaction is (S)-4-amino-5-oxopentanoate = 5-aminolevulinate. Its pathway is porphyrin-containing compound metabolism; protoporphyrin-IX biosynthesis; 5-aminolevulinate from L-glutamyl-tRNA(Glu): step 2/2. The protein operates within porphyrin-containing compound metabolism; chlorophyll biosynthesis. This is Glutamate-1-semialdehyde 2,1-aminomutase from Trichodesmium erythraeum (strain IMS101).